Reading from the N-terminus, the 550-residue chain is Glucose-6-phosphate isomerase (550 aa).

The Proton donor role is filled by E357. Active-site residues include H388 and K516.

The protein belongs to the GPI family.

The protein resides in the cytoplasm. The catalysed reaction is alpha-D-glucose 6-phosphate = beta-D-fructose 6-phosphate. It functions in the pathway carbohydrate biosynthesis; gluconeogenesis. It participates in carbohydrate degradation; glycolysis; D-glyceraldehyde 3-phosphate and glycerone phosphate from D-glucose: step 2/4. Its function is as follows. Catalyzes the reversible isomerization of glucose-6-phosphate to fructose-6-phosphate. The chain is Glucose-6-phosphate isomerase from Psychromonas ingrahamii (strain DSM 17664 / CCUG 51855 / 37).